We begin with the raw amino-acid sequence, 162 residues long: uncharacterized protein (162 aa).

The signal sequence occupies residues 1-34; the sequence is MRKKNNIKKWLLIIAGFLIICIITLFVMVSGNKV.

This is an uncharacterized protein from Bacillus subtilis (strain 168).